The sequence spans 152 residues: Deoxyuridine 5'-triphosphate nucleotidohydrolase (152 aa).

Substrate contacts are provided by residues Arg71–Gly73, Asn84, Leu88–Asp90, and Met98.

Belongs to the dUTPase family. It depends on Mg(2+) as a cofactor.

It catalyses the reaction dUTP + H2O = dUMP + diphosphate + H(+). The protein operates within pyrimidine metabolism; dUMP biosynthesis; dUMP from dCTP (dUTP route): step 2/2. Its function is as follows. This enzyme is involved in nucleotide metabolism: it produces dUMP, the immediate precursor of thymidine nucleotides and it decreases the intracellular concentration of dUTP so that uracil cannot be incorporated into DNA. This is Deoxyuridine 5'-triphosphate nucleotidohydrolase from Shewanella halifaxensis (strain HAW-EB4).